We begin with the raw amino-acid sequence, 443 residues long: Chorionicgonadotropic hormone-like protein (443 aa).

Over residues 263-286 (RCAGRPCPRRHRRPCNASKSHRPM) the composition is skewed to basic residues. The disordered stretch occupies residues 263-292 (RCAGRPCPRRHRRPCNASKSHRPMRMQQRD).

It to mammalian CGHB.

The protein resides in the secreted. The protein localises to the cell wall. Cell wall protein that resembles the beta subunit of human chorionic gonadotropin. Stimulates growth and change in morphology. This is Chorionicgonadotropic hormone-like protein (xcg) from Stenotrophomonas maltophilia (Pseudomonas maltophilia).